Reading from the N-terminus, the 291-residue chain is MIQGSIVALATPMEPDGRLDVPGLRRLVEFHIEQGTDAIVAVGTTGESATLDEEEHTEVIRLVVEQAAGRIPVIAGTGANATTEAIRLTARAKAVGADACLLVTPYYNKPTQEGLYRHYLAVAEAVDIPQILYNVPGRTGCDMLPATVGRLAQVPGIVGIKEATGKLERLAEIRALCPEGFALYSGDDATACEFCLSGGNGVISVTANVAPRLMQEMCRAAIAGDRATAEAINRRLEALHHDLFIESNPIPVKWALHEMGLIQEGIRLPLTWLAASCREAVRQAMRQAGVL.

Thr-45 contributes to the pyruvate binding site. The Proton donor/acceptor role is filled by Tyr-133. The active-site Schiff-base intermediate with substrate is Lys-161. Ile-203 lines the pyruvate pocket.

Belongs to the DapA family. In terms of assembly, homotetramer; dimer of dimers.

It localises to the cytoplasm. It catalyses the reaction L-aspartate 4-semialdehyde + pyruvate = (2S,4S)-4-hydroxy-2,3,4,5-tetrahydrodipicolinate + H2O + H(+). Its pathway is amino-acid biosynthesis; L-lysine biosynthesis via DAP pathway; (S)-tetrahydrodipicolinate from L-aspartate: step 3/4. Functionally, catalyzes the condensation of (S)-aspartate-beta-semialdehyde [(S)-ASA] and pyruvate to 4-hydroxy-tetrahydrodipicolinate (HTPA). This chain is 4-hydroxy-tetrahydrodipicolinate synthase, found in Methylococcus capsulatus (strain ATCC 33009 / NCIMB 11132 / Bath).